Here is a 375-residue protein sequence, read N- to C-terminus: GDP-mannose-dependent alpha-mannosyltransferase (375 aa).

This sequence belongs to the glycosyltransferase group 1 family. Glycosyltransferase 4 subfamily.

The protein operates within phospholipid metabolism; phosphatidylinositol metabolism. Catalyzes the addition of a mannose residue from GDP-D-mannose to GlcAGroAc2 to generate 1,2-di-O-C16/C18:1-(alpha-D-mannopyranosyl)-(1-4)-(alpha-D-glucopyranosyluronic acid)-(1-3)-glycerol(ManGlcAGroAc2). This is GDP-mannose-dependent alpha-mannosyltransferase (mgtA) from Mycolicibacterium smegmatis (strain ATCC 700084 / mc(2)155) (Mycobacterium smegmatis).